A 432-amino-acid chain; its full sequence is Pentatricopeptide repeat-containing protein 2, mitochondrial (432 aa).

Residues 1-33 constitute a mitochondrion transit peptide; it reads MQFIKRTFPRRAFVDLLLNRFCLREFATTYSVS. PPR repeat units lie at residues 108-142, 143-179, 360-394, and 395-429; these read KTVAYNLVLQYHLAKGHYNAAWSLYNDMKKRQQKP, SDHTYSILLKGFCDAIEKNKQGNFSKLREYSEKVTAS, NLQVYHEKLRNLVQQGQAAECLNTIKRMSHNGPFP, and TQQTFLIVLSLCKRPKFYSYTKSFLDLAKKLNVPV.

Its subcellular location is the mitochondrion. Functionally, mitochondrial RNA-binding protein that acts as a general translation factor. Plays a critical role in the synthesis of all mitochondrial DNA-encoded oxidative phosphorylation subunits, which are essential for mitochondrial respiration. Essential for the expression of iron-sulfur cluster (ISC) proteins as well as other heme proteins related to iron-sensing, and thus plays a key role in iron homeostasis. The chain is Pentatricopeptide repeat-containing protein 2, mitochondrial from Schizosaccharomyces pombe (strain 972 / ATCC 24843) (Fission yeast).